The sequence spans 257 residues: Phosphatidylglycerol--prolipoprotein diacylglyceryl transferase (257 aa).

The next 7 membrane-spanning stretches (helical) occupy residues 13–33 (IGPI…AIGG), 49–69 (FLLN…RLMF), 88–108 (IYEG…AGLY), 123–143 (FAVL…IFNQ), 152–172 (FAFG…ILLI), 185–202 (GYQF…RGLI), and 223–243 (IGFF…AYWM). Residue R136 participates in a 1,2-diacyl-sn-glycero-3-phospho-(1'-sn-glycerol) binding.

Belongs to the Lgt family.

The protein resides in the cell membrane. The enzyme catalyses L-cysteinyl-[prolipoprotein] + a 1,2-diacyl-sn-glycero-3-phospho-(1'-sn-glycerol) = an S-1,2-diacyl-sn-glyceryl-L-cysteinyl-[prolipoprotein] + sn-glycerol 1-phosphate + H(+). It participates in protein modification; lipoprotein biosynthesis (diacylglyceryl transfer). Functionally, catalyzes the transfer of the diacylglyceryl group from phosphatidylglycerol to the sulfhydryl group of the N-terminal cysteine of a prolipoprotein, the first step in the formation of mature lipoproteins. The protein is Phosphatidylglycerol--prolipoprotein diacylglyceryl transferase of Thermoanaerobacter pseudethanolicus (strain ATCC 33223 / 39E) (Clostridium thermohydrosulfuricum).